Here is a 158-residue protein sequence, read N- to C-terminus: NADPH-dependent 7-cyano-7-deazaguanine reductase (158 aa).

The Thioimide intermediate role is filled by cysteine 56. The Proton donor role is filled by aspartate 63. Substrate is bound by residues 78-80 (LES) and 97-98 (HE).

Belongs to the GTP cyclohydrolase I family. QueF type 1 subfamily.

It is found in the cytoplasm. It carries out the reaction 7-aminomethyl-7-carbaguanine + 2 NADP(+) = 7-cyano-7-deazaguanine + 2 NADPH + 3 H(+). The protein operates within tRNA modification; tRNA-queuosine biosynthesis. Its function is as follows. Catalyzes the NADPH-dependent reduction of 7-cyano-7-deazaguanine (preQ0) to 7-aminomethyl-7-deazaguanine (preQ1). This Nitrobacter hamburgensis (strain DSM 10229 / NCIMB 13809 / X14) protein is NADPH-dependent 7-cyano-7-deazaguanine reductase.